Reading from the N-terminus, the 465-residue chain is Calcitonin gene-related peptide type 1 receptor (465 aa).

Residues 1–17 (MVICLLLCTPTDIFVVA) form the signal peptide. Over 18-141 (SPEVNETQEY…HTNEGRMTAM (124 aa)) the chain is Extracellular. Asn22, Asn68, Asn120, and Asn125 each carry an N-linked (GlcNAc...) asparagine glycan. Intrachain disulfides connect Cys50–Cys76, Cys67–Cys107, and Cys90–Cys129. Residues 142 to 166 (NLFYLALIGHGLSLTSLLISLGIFF) form a helical membrane-spanning segment. At 167–177 (YFKSLSCQRIT) the chain is on the cytoplasmic side. A helical transmembrane segment spans residues 178 to 200 (LHKNLFFSFVLNSVITIIWLTAV). Topologically, residues 201-211 (ANNQELVQRNP) are extracellular. Residues 212-240 (TSCKVSQFIHLYLFGCNYFWMLCEGIYLH) traverse the membrane as a helical segment. Residues 241–254 (TLIVVAVFAEKQHL) are Cytoplasmic-facing. Residues 255–275 (MWYYLLGWGFPLIPASIHAIA) form a helical membrane-spanning segment. Residues 276 to 291 (RSYYYNDNCWISSNTS) lie on the Extracellular side of the membrane. Asn289 carries N-linked (GlcNAc...) asparagine glycosylation. A helical transmembrane segment spans residues 292 to 316 (LLYIIHGPICAALLVNLFFLLNIVR). The Cytoplasmic portion of the chain corresponds to 317–331 (VLITKLKVTHQAESS). A helical transmembrane segment spans residues 332–353 (LYMKAVRATLILVPLLGIQYVL). At 354–368 (LPYKPEGRVSSEIYD) the chain is on the extracellular side. The chain crosses the membrane as a helical span at residues 369 to 389 (YIMHILMHYQGLLVATIFCFF). At 390–465 (NGEVQGVLRR…SILKSENPFT (76 aa)) the chain is on the cytoplasmic side.

It belongs to the G-protein coupled receptor 2 family.

The protein resides in the cell membrane. Functionally, may function as G protein-coupled receptor for calcitonin-gene-related peptides and adrenomedullin. Specificity may be modulated by accessory proteins. May activate cAMP-dependent pathway. In Oncorhynchus gorbuscha (Pink salmon), this protein is Calcitonin gene-related peptide type 1 receptor (calcrl).